We begin with the raw amino-acid sequence, 434 residues long: Tol-Pal system protein TolB (434 aa).

A signal peptide spans 1–24 (MKFSAYLTTLFIVLFSLFIQTVQA).

It belongs to the TolB family. As to quaternary structure, the Tol-Pal system is composed of five core proteins: the inner membrane proteins TolA, TolQ and TolR, the periplasmic protein TolB and the outer membrane protein Pal. They form a network linking the inner and outer membranes and the peptidoglycan layer.

Its subcellular location is the periplasm. Functionally, part of the Tol-Pal system, which plays a role in outer membrane invagination during cell division and is important for maintaining outer membrane integrity. In Histophilus somni (strain 2336) (Haemophilus somnus), this protein is Tol-Pal system protein TolB.